The following is a 1363-amino-acid chain: Vascular endothelial growth factor receptor 3 (1363 aa).

Positions M1–G24 are cleaved as a signal peptide. At Y25–E775 the chain is on the extracellular side. 6 N-linked (GlcNAc...) asparagine glycosylation sites follow: N33, N104, N166, N251, N299, and N411. 7 Ig-like C2-type domains span residues G44 to A118, K151 to Q213, Y230 to I326, P331 to E415, P422 to T552, P555 to S671, and P678 to A764. 2 cysteine pairs are disulfide-bonded: C51/C111 and C158/C206. C252 and C310 are joined by a disulfide. Disulfide bonds link C445/C534, C466/C486, and C578/C653. 5 N-linked (GlcNAc...) asparagine glycosylation sites follow: N515, N527, N582, N594, and N683. C699 and C751 are disulfide-bonded. Residue N758 is glycosylated (N-linked (GlcNAc...) asparagine). A helical membrane pass occupies residues I776–I796. Residues F797 to Y1363 are Cytoplasmic-facing. Phosphotyrosine; by SRC is present on residues Y830 and Y833. The 329-residue stretch at L845–L1173 folds into the Protein kinase domain. Residues L851–V859 and K879 contribute to the ATP site. D1037 functions as the Proton acceptor in the catalytic mechanism. A Phosphotyrosine; by autocatalysis and SRC modification is found at Y1063. 4 positions are modified to phosphotyrosine; by autocatalysis: Y1068, Y1230, Y1231, and Y1265. The span at S1289 to G1317 shows a compositional bias: basic and acidic residues. The segment at S1289–K1330 is disordered. 2 positions are modified to phosphotyrosine; by autocatalysis and SRC: Y1333 and Y1337. Position 1363 is a phosphotyrosine; by autocatalysis (Y1363).

It belongs to the protein kinase superfamily. Tyr protein kinase family. CSF-1/PDGF receptor subfamily. In terms of assembly, interacts with VEGFC and VEGFD. Monomer in the absence of bound VEGFC or VEGFD. Homodimer in the presence of bound VEGFC or VEGFD. Can also form a heterodimer with KDR. Interacts with PTPN14; the interaction is enhanced by stimulation with VEGFC. Interacts with CRK, GRB2, PTK2/FAK1, SHC1, PIK3R1 and PTPN11/SHP-2. Identified in a complex with SRC and ITGB1. Identified in a complex with SRC and ITGB1. Post-translationally, autophosphorylated on tyrosine residues upon ligand binding. Autophosphorylation occurs in trans, i.e. one subunit of the dimeric receptor phosphorylates tyrosine residues on the other subunit. Phosphorylation in response to H(2)O(2) is mediated by a process that requires SRC and PRKCD activity. Phosphorylation at Tyr-1068 is required for autophosphorylation at additional tyrosine residues. Phosphorylation at Tyr-1063 and Tyr-1337 is important for interaction with CRK and subsequent activation of MAPK8. Phosphorylation at Tyr-1230, Tyr-1231 and Tyr-1337 is important for interaction with GRB2 and subsequent activation of the AKT1 and MAPK1/ERK2 and/or MAPK3/ERK1 signaling pathways. In response to endothelial cell adhesion onto collagen, can also be phosphorylated in the absence of FLT4 kinase activity by SRC.

It localises to the cell membrane. It is found in the cytoplasm. The protein resides in the nucleus. The catalysed reaction is L-tyrosyl-[protein] + ATP = O-phospho-L-tyrosyl-[protein] + ADP + H(+). Its activity is regulated as follows. Present in an inactive conformation in the absence of bound ligand. Binding of VEGFC or VEGFD leads to dimerization and activation by autophosphorylation on tyrosine residues. In terms of biological role, tyrosine-protein kinase that acts as a cell-surface receptor for VEGFC and VEGFD, and plays an essential role in adult lymphangiogenesis and in the development of the vascular network and the cardiovascular system during embryonic development. Promotes proliferation, survival and migration of endothelial cells, and regulates angiogenic sprouting. Signaling by activated FLT4 leads to enhanced production of VEGFC, and to a lesser degree VEGFA, thereby creating a positive feedback loop that enhances FLT4 signaling. Modulates KDR signaling by forming heterodimers. Mediates activation of the MAPK1/ERK2, MAPK3/ERK1 signaling pathway, of MAPK8 and the JUN signaling pathway, and of the AKT1 signaling pathway. Phosphorylates SHC1. Mediates phosphorylation of PIK3R1, the regulatory subunit of phosphatidylinositol 3-kinase. Promotes phosphorylation of MAPK8 at 'Thr-183' and 'Tyr-185', and of AKT1 at 'Ser-473'. The sequence is that of Vascular endothelial growth factor receptor 3 (Flt4) from Rattus norvegicus (Rat).